The sequence spans 637 residues: ATP-dependent zinc metalloprotease FtsH (637 aa).

Residues methionine 1–arginine 6 are Cytoplasmic-facing. The helical transmembrane segment at serine 7 to serine 27 threads the bilayer. Residues aspartate 28–threonine 103 are Periplasmic-facing. Residues phenylalanine 104 to phenylalanine 124 form a helical membrane-spanning segment. The Cytoplasmic portion of the chain corresponds to methionine 125 to serine 637. Glycine 195–threonine 202 is a binding site for ATP. Histidine 417 is a Zn(2+) binding site. Glutamate 418 is a catalytic residue. Residues histidine 421 and aspartate 495 each coordinate Zn(2+). Residues aspartate 617 to serine 637 form a disordered region.

It in the central section; belongs to the AAA ATPase family. In the C-terminal section; belongs to the peptidase M41 family. In terms of assembly, homohexamer. It depends on Zn(2+) as a cofactor.

Its subcellular location is the cell inner membrane. In terms of biological role, acts as a processive, ATP-dependent zinc metallopeptidase for both cytoplasmic and membrane proteins. Plays a role in the quality control of integral membrane proteins. This Rickettsia typhi (strain ATCC VR-144 / Wilmington) protein is ATP-dependent zinc metalloprotease FtsH.